Consider the following 493-residue polypeptide: 3-octaprenyl-4-hydroxybenzoate carboxy-lyase (493 aa).

Asn-172 lines the Mn(2+) pocket. Prenylated FMN is bound by residues 175–177 (IYR), 189–191 (RWL), and 194–195 (RG). Residue Glu-238 participates in Mn(2+) binding. Asp-287 functions as the Proton donor in the catalytic mechanism.

The protein belongs to the UbiD family. In terms of assembly, homohexamer. Prenylated FMN is required as a cofactor. Requires Mn(2+) as cofactor.

Its subcellular location is the cell membrane. It carries out the reaction a 4-hydroxy-3-(all-trans-polyprenyl)benzoate + H(+) = a 2-(all-trans-polyprenyl)phenol + CO2. It participates in cofactor biosynthesis; ubiquinone biosynthesis. Catalyzes the decarboxylation of 3-octaprenyl-4-hydroxy benzoate to 2-octaprenylphenol, an intermediate step in ubiquinone biosynthesis. This Shewanella denitrificans (strain OS217 / ATCC BAA-1090 / DSM 15013) protein is 3-octaprenyl-4-hydroxybenzoate carboxy-lyase.